Consider the following 255-residue polypeptide: Ribonuclease HII (255 aa).

An RNase H type-2 domain is found at Asp-70–Lys-255. A divalent metal cation-binding residues include Asp-76, Glu-77, and Asp-168.

Belongs to the RNase HII family. It depends on Mn(2+) as a cofactor. Mg(2+) serves as cofactor.

It localises to the cytoplasm. It catalyses the reaction Endonucleolytic cleavage to 5'-phosphomonoester.. Its function is as follows. Endonuclease that specifically degrades the RNA of RNA-DNA hybrids. This chain is Ribonuclease HII, found in Pediococcus pentosaceus (strain ATCC 25745 / CCUG 21536 / LMG 10740 / 183-1w).